We begin with the raw amino-acid sequence, 582 residues long: DBIRD complex subunit ZNF326 (582 aa).

The tract at residues 1–124 (MDFEDDYTHS…YRNSLDSFGG (124 aa)) is mediates transcriptional activation. S48, S56, S63, S69, S81, S82, S91, S106, S114, S118, S121, and S137 each carry phosphoserine. K140 participates in a covalent cross-link: Glycyl lysine isopeptide (Lys-Gly) (interchain with G-Cter in SUMO2). A disordered region spans residues 154–194 (YSSYSSFSSPHMKPAPVGSRGRGTPAYPESTFGSRNYDAFG). R173 is subject to Omega-N-methylarginine. S212 is subject to Phosphoserine. At R235 the chain carries Omega-N-methylarginine. A Bipartite nuclear localization signal motif is present at residues 238-260 (KRKMMQPFNKPSGTFIKKPKLAK). Residue K240 forms a Glycyl lysine isopeptide (Lys-Gly) (interchain with G-Cter in SUMO2) linkage. The interval 243-302 (QPFNKPSGTFIKKPKLAKPMEKISLSKSPTKTDPKNEEEEKRRIEARREKQRRRREKNSE) is disordered. K247 carries the N6-acetyllysine; alternate modification. A Glycyl lysine isopeptide (Lys-Gly) (interchain with G-Cter in SUMO2); alternate cross-link involves residue K247. Phosphoserine is present on S249. Position 251 is a phosphothreonine (T251). Residues K254 and K264 each participate in a glycyl lysine isopeptide (Lys-Gly) (interchain with G-Cter in SUMO2) cross-link. Position 270 is a phosphoserine (S270). A compositionally biased stretch (basic and acidic residues) spans 272–290 (TKTDPKNEEEEKRRIEARR). Residues 314-336 (CSFCKFRTFEEKDIELHLESSSH) form a C2H2 AKAP95-type 1 zinc finger. A Glycyl lysine isopeptide (Lys-Gly) (interchain with G-Cter in SUMO2) cross-link involves residue K401. The segment at 407–430 (CSACSVYIPALHSSVQQHLKSPDH) adopts a C2H2 AKAP95-type 2 zinc-finger fold. Glycyl lysine isopeptide (Lys-Gly) (interchain with G-Cter in SUMO2) cross-links involve residues K459 and K467. The tract at residues 472 to 582 (FEIQDHSQDQ…DFPVEQPEEN (111 aa)) is disordered. Positions 483-523 (IEGDEEDEEKIDEPIEEEEDEDEEEEAEEVGEVEEVEEVEE) are enriched in acidic residues. The segment covering 530–545 (EGEGNIQGVGEGGEVG) has biased composition (gly residues). Residues 552-567 (GVGEVEEVEELEEETA) are compositionally biased toward acidic residues.

This sequence belongs to the AKAP95 family. Component of the DBIRD complex. Interacts with CCAR2; the interaction is direct.

It is found in the nucleus matrix. In terms of biological role, core component of the DBIRD complex, a multiprotein complex that acts at the interface between core mRNP particles and RNA polymerase II (RNAPII) and integrates transcript elongation with the regulation of alternative splicing: the DBIRD complex affects local transcript elongation rates and alternative splicing of a large set of exons embedded in (A + T)-rich DNA regions. May play a role in neuronal differentiation and is able to bind DNA and activate expression in vitro. This chain is DBIRD complex subunit ZNF326 (ZNF326), found in Homo sapiens (Human).